The chain runs to 1051 residues: Exportin-T (1051 aa).

Belongs to the exportin family.

The protein resides in the nucleus. It is found in the cytoplasm. Its function is as follows. tRNA nucleus export receptor which facilitates tRNA translocation across the nuclear pore complex. Involved in pre-tRNA splicing, probably by affecting the interaction of pre-tRNA with splicing endonuclease. This chain is Exportin-T (LOS1), found in Eremothecium gossypii (strain ATCC 10895 / CBS 109.51 / FGSC 9923 / NRRL Y-1056) (Yeast).